The sequence spans 161 residues: Gamma-glutamylaminecyclotransferase A (161 aa).

Substrate is bound at residue 26–29 (YGTL). Glu101 functions as the Proton acceptor in the catalytic mechanism.

Belongs to the gamma-glutamylcyclotransferase family.

The enzyme catalyses epsilon-(gamma-L-glutamyl)-L-lysine = 5-oxo-L-proline + L-lysine. Its function is as follows. May contribute to degradation of proteins cross-linked by transglutaminases by degrading the cross-link between a lysine and a glutamic acid residue. Catalyzes the formation of 5-oxo-L-proline from L-gamma-glutamyl-L-epsilon-lysine. In Danio rerio (Zebrafish), this protein is Gamma-glutamylaminecyclotransferase A (ggact.1).